A 379-amino-acid chain; its full sequence is L-lactate dehydrogenase (379 aa).

The FMN hydroxy acid dehydrogenase domain occupies M1–P379. Y24 is a substrate binding site. FMN contacts are provided by S106 and Q127. A substrate-binding site is contributed by Y129. T155 is an FMN binding site. Residue R164 coordinates substrate. K251 serves as a coordination point for FMN. Catalysis depends on H275, which acts as the Proton acceptor. R278 contributes to the substrate binding site. An FMN-binding site is contributed by D306–R330.

It belongs to the FMN-dependent alpha-hydroxy acid dehydrogenase family. The cofactor is FMN.

Its subcellular location is the cell membrane. It catalyses the reaction (S)-lactate + A = pyruvate + AH2. Its function is as follows. Catalyzes the conversion of L-lactate to pyruvate. Is coupled to the respiratory chain. This is L-lactate dehydrogenase from Alcaligenes faecalis.